The sequence spans 147 residues: Transcriptional regulator MraZ (147 aa).

2 consecutive SpoVT-AbrB domains span residues 5-50 (AVAL…PLTA) and 79-122 (AQEE…SDAG).

It belongs to the MraZ family. In terms of assembly, forms oligomers.

The protein resides in the cytoplasm. It is found in the nucleoid. The protein is Transcriptional regulator MraZ of Azoarcus sp. (strain BH72).